A 208-amino-acid polypeptide reads, in one-letter code: Small ribosomal subunit protein uS4 (208 aa).

The S4 RNA-binding domain maps to Gln-98–Leu-163.

The protein belongs to the universal ribosomal protein uS4 family. In terms of assembly, part of the 30S ribosomal subunit. Contacts protein S5. The interaction surface between S4 and S5 is involved in control of translational fidelity.

In terms of biological role, one of the primary rRNA binding proteins, it binds directly to 16S rRNA where it nucleates assembly of the body of the 30S subunit. With S5 and S12 plays an important role in translational accuracy. The chain is Small ribosomal subunit protein uS4 from Campylobacter jejuni subsp. jejuni serotype O:6 (strain 81116 / NCTC 11828).